The sequence spans 779 residues: Cysteine-rich protein 2-binding protein (779 aa).

The segment at 1-34 (MDSSIHLSGLLSRHDDDATRTSTSEGLEEGEVEG) is disordered. At Ser4 the chain carries Phosphoserine. The residue at position 230 (Lys230) is an N6-acetyllysine. Disordered regions lie at residues 247–292 (SRNP…PVKF), 314–345 (LSSS…HSAT), and 360–457 (PPQA…GPRY). A compositionally biased stretch (basic and acidic residues) spans 255-275 (MELKEKRSRTQEAKDIRRAQK). Ser284 bears the Phosphoserine mark. The residue at position 291 (Lys291) is an N6-acetyllysine. Over residues 314–334 (LSSSDRTPLTSPSPSPSLDFS) the composition is skewed to low complexity. Composition is skewed to basic and acidic residues over residues 402–423 (RAPE…RMDG) and 443–452 (KPPLEKDMKP). Ser413 is modified (phosphoserine). The region spanning 635–779 (LDYCYVRPNH…KHAFFLRLRR (145 aa)) is the N-acetyltransferase domain.

Interacts with the LIM 1 domain of CSRP2. Component of the ADA2A-containing complex (ATAC), composed of CSRP2BP, KAT2A, TADA2L, TADA3L, ZZ3, MBIP, WDR5, YEATS2, CCDC101 and DR1. In the complex, it probably interacts directly with KAT2A, MBIP and WDR5.

The protein localises to the nucleus. Its subcellular location is the cytoplasm. In terms of biological role, component of the ATAC complex, a complex with histone acetyltransferase activity on histones H3 and H4. May function as a scaffold for the ATAC complex to promote ATAC complex stability. Has also weak histone acetyltransferase activity toward histone H4. Required for the normal progression through G1 and G2/M phases of the cell cycle. This Mus musculus (Mouse) protein is Cysteine-rich protein 2-binding protein.